A 339-amino-acid polypeptide reads, in one-letter code: Holliday junction branch migration complex subunit RuvB (339 aa).

The tract at residues 2–187 (KDVNDEERII…FGIIEHMQYY (186 aa)) is large ATPase domain (RuvB-L). ATP-binding positions include leucine 26, arginine 27, glycine 68, lysine 71, threonine 72, threonine 73, 134-136 (EDF), arginine 177, tyrosine 187, and arginine 224. Threonine 72 is a Mg(2+) binding site. A small ATPAse domain (RuvB-S) region spans residues 188-258 (SIDDLEKIIQ…TTKHSLHLLE (71 aa)). The segment at 261 to 339 (DEGLDQTDRK…QLGYPPKKAE (79 aa)) is head domain (RuvB-H). The DNA site is built by arginine 316 and arginine 321.

It belongs to the RuvB family. In terms of assembly, homohexamer. Forms an RuvA(8)-RuvB(12)-Holliday junction (HJ) complex. HJ DNA is sandwiched between 2 RuvA tetramers; dsDNA enters through RuvA and exits via RuvB. An RuvB hexamer assembles on each DNA strand where it exits the tetramer. Each RuvB hexamer is contacted by two RuvA subunits (via domain III) on 2 adjacent RuvB subunits; this complex drives branch migration. In the full resolvosome a probable DNA-RuvA(4)-RuvB(12)-RuvC(2) complex forms which resolves the HJ.

The protein localises to the cytoplasm. It carries out the reaction ATP + H2O = ADP + phosphate + H(+). In terms of biological role, the RuvA-RuvB-RuvC complex processes Holliday junction (HJ) DNA during genetic recombination and DNA repair, while the RuvA-RuvB complex plays an important role in the rescue of blocked DNA replication forks via replication fork reversal (RFR). RuvA specifically binds to HJ cruciform DNA, conferring on it an open structure. The RuvB hexamer acts as an ATP-dependent pump, pulling dsDNA into and through the RuvAB complex. RuvB forms 2 homohexamers on either side of HJ DNA bound by 1 or 2 RuvA tetramers; 4 subunits per hexamer contact DNA at a time. Coordinated motions by a converter formed by DNA-disengaged RuvB subunits stimulates ATP hydrolysis and nucleotide exchange. Immobilization of the converter enables RuvB to convert the ATP-contained energy into a lever motion, pulling 2 nucleotides of DNA out of the RuvA tetramer per ATP hydrolyzed, thus driving DNA branch migration. The RuvB motors rotate together with the DNA substrate, which together with the progressing nucleotide cycle form the mechanistic basis for DNA recombination by continuous HJ branch migration. Branch migration allows RuvC to scan DNA until it finds its consensus sequence, where it cleaves and resolves cruciform DNA. In Lactobacillus gasseri (strain ATCC 33323 / DSM 20243 / BCRC 14619 / CIP 102991 / JCM 1131 / KCTC 3163 / NCIMB 11718 / NCTC 13722 / AM63), this protein is Holliday junction branch migration complex subunit RuvB.